Here is a 291-residue protein sequence, read N- to C-terminus: Fructose-1,6-bisphosphatase class 1 1 (291 aa).

Mg(2+) is bound by residues Glu-78, Asp-95, Leu-97, and Asp-98. Substrate-binding positions include 98 to 101 (DGSS), Tyr-203, and Lys-233. Residue Glu-239 coordinates Mg(2+).

This sequence belongs to the FBPase class 1 family. In terms of assembly, homotetramer. Mg(2+) is required as a cofactor.

Its subcellular location is the cytoplasm. The catalysed reaction is beta-D-fructose 1,6-bisphosphate + H2O = beta-D-fructose 6-phosphate + phosphate. Its pathway is carbohydrate biosynthesis; gluconeogenesis. The polypeptide is Fructose-1,6-bisphosphatase class 1 1 (Haloarcula marismortui (strain ATCC 43049 / DSM 3752 / JCM 8966 / VKM B-1809) (Halobacterium marismortui)).